A 417-amino-acid polypeptide reads, in one-letter code: Serine hydroxymethyltransferase (417 aa).

Residues L117 and 121 to 123 contribute to the (6S)-5,6,7,8-tetrahydrofolate site; that span reads GHL. Position 226 is an N6-(pyridoxal phosphate)lysine (K226).

This sequence belongs to the SHMT family. In terms of assembly, homodimer. It depends on pyridoxal 5'-phosphate as a cofactor.

It localises to the cytoplasm. The enzyme catalyses (6R)-5,10-methylene-5,6,7,8-tetrahydrofolate + glycine + H2O = (6S)-5,6,7,8-tetrahydrofolate + L-serine. It functions in the pathway one-carbon metabolism; tetrahydrofolate interconversion. Its pathway is amino-acid biosynthesis; glycine biosynthesis; glycine from L-serine: step 1/1. In terms of biological role, catalyzes the reversible interconversion of serine and glycine with tetrahydrofolate (THF) serving as the one-carbon carrier. This reaction serves as the major source of one-carbon groups required for the biosynthesis of purines, thymidylate, methionine, and other important biomolecules. Also exhibits THF-independent aldolase activity toward beta-hydroxyamino acids, producing glycine and aldehydes, via a retro-aldol mechanism. This is Serine hydroxymethyltransferase from Syntrophus aciditrophicus (strain SB).